We begin with the raw amino-acid sequence, 171 residues long: 6,7-dimethyl-8-ribityllumazine synthase (171 aa).

5-amino-6-(D-ribitylamino)uracil contacts are provided by residues phenylalanine 24, 58 to 60, and 82 to 84; these read ALE and AVI. Residue 87-88 participates in (2S)-2-hydroxy-3-oxobutyl phosphate binding; it reads ET. The Proton donor role is filled by histidine 90. Asparagine 115 provides a ligand contact to 5-amino-6-(D-ribitylamino)uracil. Residue arginine 129 coordinates (2S)-2-hydroxy-3-oxobutyl phosphate. Residues 150-171 form a disordered region; it reads ALDQLGDDEDEEEDEEDEEERA. The segment covering 154–171 has biased composition (acidic residues); sequence LGDDEDEEEDEEDEEERA.

The protein belongs to the DMRL synthase family.

It catalyses the reaction (2S)-2-hydroxy-3-oxobutyl phosphate + 5-amino-6-(D-ribitylamino)uracil = 6,7-dimethyl-8-(1-D-ribityl)lumazine + phosphate + 2 H2O + H(+). Its pathway is cofactor biosynthesis; riboflavin biosynthesis; riboflavin from 2-hydroxy-3-oxobutyl phosphate and 5-amino-6-(D-ribitylamino)uracil: step 1/2. Catalyzes the formation of 6,7-dimethyl-8-ribityllumazine by condensation of 5-amino-6-(D-ribitylamino)uracil with 3,4-dihydroxy-2-butanone 4-phosphate. This is the penultimate step in the biosynthesis of riboflavin. The protein is 6,7-dimethyl-8-ribityllumazine synthase of Burkholderia ambifaria (strain ATCC BAA-244 / DSM 16087 / CCUG 44356 / LMG 19182 / AMMD) (Burkholderia cepacia (strain AMMD)).